We begin with the raw amino-acid sequence, 35 residues long: Alpha-amanitin proprotein (35 aa).

Residues 1-10 constitute a propeptide that is removed on maturation; that stretch reads MSDINATRLP. I11 is subject to (3R,4R)-4,5-dihydroxyisoleucine; in form alpha-amanitin. (3R,4S)-4-hydroxyisoleucine; in form gamma-amanitin is present on I11. The cyclopeptide (Ile-Pro) cross-link spans 11–18; the sequence is IWGIGCNP. A cross-link (2'-cysteinyl-6'-hydroxytryptophan sulfoxide (Trp-Cys)) is located at residues 12-16; it reads WGIGC. P18 carries the 4-hydroxyproline modification. The propeptide occupies 19–35; it reads CVGDDVTTLLTRGEALC.

It belongs to the MSDIN fungal toxin family. Processed by the macrocyclase-peptidase enzyme POPB to yield a toxic cyclic decapeptide. POPB first removes 10 residues from the N-terminus. Conformational trapping of the remaining peptide forces the enzyme to release this intermediate rather than proceed to macrocyclization. The enzyme rebinds the remaining peptide in a different conformation and catalyzes macrocyclization of the N-terminal 8 residues.

Its function is as follows. Major toxin belonging to the bicyclic octapeptides amatoxins that acts by binding non-competitively to RNA polymerase II and greatly slowing the elongation of transcripts from target promoters. This chain is Alpha-amanitin proprotein, found in Amanita bisporigera (Destroying angel).